The sequence spans 614 residues: Vitamin B12 transporter BtuB (614 aa).

An N-terminal signal peptide occupies residues 1 to 20 (MIKKATLLTAFSVTAFSAWA). The TonB box signature appears at 26–33 (DTLVVTAN). The TBDR plug domain occupies 38–152 (PRSAVLAPVT…IGGVVNIITT (115 aa)). Cyanocob(III)alamin contacts are provided by residues Ser85, Asn92, and 110-111 (VS). Positions 155 to 614 (NPGTELTAGW…EYTLSGSYTF (460 aa)) constitute a TBDR beta-barrel domain. Transmembrane regions (beta stranded) follow at residues 158–165 (TELTAGWG), 169–178 (YQNYDISTQQ), and 184–195 (TRATLIGDYEYT). 4 residues coordinate Ca(2+): Asp199, Gln211, Asp213, and Asp215. 2 beta stranded membrane passes run 217 to 227 (FLSKTLYGALE) and 232 to 248 (DRWS…NRTD). Tyr249 and Asp250 together coordinate Ca(2+). Ala251 contributes to the cyanocob(III)alamin binding site. A Ca(2+)-binding site is contributed by Asp261. 14 consecutive transmembrane segments (beta stranded) span residues 263–277 (RKLY…LHFN), 279–296 (ERIQ…KDYN), 309–325 (TLDE…NSVV), 328–337 (HGNVGAGVDW), 353–369 (YDQR…QQLG), 371–381 (FTLEAAARSDD), 385–400 (FGRH…WEFI), 403–417 (YRFI…KAPN), 434–443 (KSKQWEGAFE), 449–458 (VSWRISGYRN), 473–490 (YYNE…TANF), 494–509 (PLTH…ARNA), 517–529 (RRSK…QLDW), and 535–550 (DWGM…YDSD). Thr309 provides a ligand contact to cyanocob(III)alamin. Residue Arg517 coordinates cyanocob(III)alamin. Position 551 (Tyr551) interacts with cyanocob(III)alamin. 3 beta stranded membrane passes run 558–572 (TVKM…LTVA), 585–596 (IANLFDKDYETV), and 602–614 (AGRE…SYTF). Residues 597 to 614 (YGYQTAGREYTLSGSYTF) carry the TonB C-terminal box motif.

It belongs to the TonB-dependent receptor family. BtuB (TC 1.B.14.3.1) subfamily.

The protein localises to the cell outer membrane. Functionally, involved in the active translocation of vitamin B12 (cyanocobalamin) across the outer membrane to the periplasmic space. It derives its energy for transport by interacting with the trans-periplasmic membrane protein TonB. The chain is Vitamin B12 transporter BtuB from Salmonella typhimurium (strain LT2 / SGSC1412 / ATCC 700720).